The following is a 476-amino-acid chain: Angiotensinogen (476 aa).

The N-terminal stretch at Met1 to Gly24 is a signal peptide. Cys42 and Cys161 are disulfide-bonded. The disordered stretch occupies residues Leu45–Gln64. Residue Asn295 is glycosylated (N-linked (GlcNAc...) asparagine).

Belongs to the serpin family. In response to low blood pressure, the enzyme renin/REN cleaves angiotensinogen to produce angiotensin-1. Angiotensin-1 is a substrate of ACE (angiotensin converting enzyme) that removes a dipeptide to yield the physiologically active peptide angiotensin-2. Angiotensin-1 and angiotensin-2 can be further processed to generate angiotensin-3, angiotensin-4. Angiotensin 1-9 is cleaved from angiotensin-1 by ACE2 and can be further processed by ACE to produce angiotensin 1-7, angiotensin 1-5 and angiotensin 1-4. Angiotensin 1-7 has also been proposed to be cleaved from angiotensin-2 by ACE2 or from angiotensin-1 by MME (neprilysin). In terms of processing, the disulfide bond is labile. Angiotensinogen is present in the circulation in a near 40:60 ratio with the oxidized disulfide-bonded form, which preferentially interacts with receptor-bound renin.

The protein resides in the secreted. In terms of biological role, essential component of the renin-angiotensin system (RAS), a potent regulator of blood pressure, body fluid and electrolyte homeostasis. Functionally, acts directly on vascular smooth muscle as a potent vasoconstrictor, affects cardiac contractility and heart rate through its action on the sympathetic nervous system, and alters renal sodium and water absorption through its ability to stimulate the zona glomerulosa cells of the adrenal cortex to synthesize and secrete aldosterone. Acts by binding to angiotensin receptors AGTR1 and AGTR2. Also binds the DEAR/FBXW7-AS1 receptor. Its function is as follows. Stimulates aldosterone release. Is a ligand for the G-protein coupled receptor MAS1. Has vasodilator and antidiuretic effects. Has an antithrombotic effect that involves MAS1-mediated release of nitric oxide from platelets. This chain is Angiotensinogen (AGT), found in Ovis aries (Sheep).